The following is a 29-amino-acid chain: Cytochrome b6-f complex subunit 8 (29 aa).

The helical transmembrane segment at 3-23 threads the bilayer; the sequence is IVSLAWAVLMVVFTFSLSLVV.

The protein belongs to the PetN family. As to quaternary structure, the 4 large subunits of the cytochrome b6-f complex are cytochrome b6, subunit IV (17 kDa polypeptide, PetD), cytochrome f and the Rieske protein, while the 4 small subunits are PetG, PetL, PetM and PetN. The complex functions as a dimer.

It localises to the plastid. The protein resides in the chloroplast thylakoid membrane. In terms of biological role, component of the cytochrome b6-f complex, which mediates electron transfer between photosystem II (PSII) and photosystem I (PSI), cyclic electron flow around PSI, and state transitions. The chain is Cytochrome b6-f complex subunit 8 from Drimys granadensis.